Reading from the N-terminus, the 206-residue chain is Reticulon-like protein B13 (206 aa).

The 191-residue stretch at 16–206 folds into the Reticulon domain; the sequence is VEDIYLWRRK…GTEEKVKKSE (191 aa). 3 helical membrane-spanning segments follow: residues 27 to 47, 50 to 70, and 134 to 154; these read LAFSTLLVSTSTWILLSFYGF, ITIVSWIGIAVVSMIFLWGSL, and IGNLLDFHTCLFIGLVMGLTV.

The protein resides in the endoplasmic reticulum membrane. This chain is Reticulon-like protein B13 (RTNLB13), found in Arabidopsis thaliana (Mouse-ear cress).